The primary structure comprises 283 residues: Pantothenate synthetase (283 aa).

30 to 37 (MGNLHAGH) contacts ATP. The Proton donor role is filled by His-37. Gln-61 contacts (R)-pantoate. Gln-61 is a binding site for beta-alanine. ATP is bound at residue 149–152 (GRKD). Gln-155 provides a ligand contact to (R)-pantoate. 186–189 (LSSR) is a binding site for ATP.

This sequence belongs to the pantothenate synthetase family. As to quaternary structure, homodimer.

The protein resides in the cytoplasm. It carries out the reaction (R)-pantoate + beta-alanine + ATP = (R)-pantothenate + AMP + diphosphate + H(+). It functions in the pathway cofactor biosynthesis; (R)-pantothenate biosynthesis; (R)-pantothenate from (R)-pantoate and beta-alanine: step 1/1. Functionally, catalyzes the condensation of pantoate with beta-alanine in an ATP-dependent reaction via a pantoyl-adenylate intermediate. This is Pantothenate synthetase from Chromohalobacter salexigens (strain ATCC BAA-138 / DSM 3043 / CIP 106854 / NCIMB 13768 / 1H11).